The following is a 128-amino-acid chain: LIM domain-containing protein 2 (128 aa).

Position 1 is an N-acetylmethionine (methionine 1). Positions 1-25 (MFQAAGAAQATPSHEAKGGGSSSTV) are disordered. The LIM zinc-binding domain occupies 39–99 (ETCAACQKTV…KPHFQQLFKS (61 aa)). Zn(2+) is bound by residues cysteine 41, cysteine 44, histidine 62, cysteine 65, cysteine 68, cysteine 71, cysteine 89, and histidine 92.

Interacts with ILK.

The protein resides in the cytoplasm. It is found in the nucleus. Acts as an activator of the protein-kinase ILK, thereby regulating cell motility. The polypeptide is LIM domain-containing protein 2 (LIMD2) (Bos taurus (Bovine)).